Consider the following 251-residue polypeptide: Small ribosomal subunit protein uS2 (251 aa).

Residue serine 2 is modified to N-acetylserine. Positions 213 to 251 (QVAEEATAAADEDVKEEVAEEQTEAADWAEGNTEEVASW) are disordered. Over residues 222-236 (ADEDVKEEVAEEQTE) the composition is skewed to acidic residues.

This sequence belongs to the universal ribosomal protein uS2 family. As to quaternary structure, component of the small ribosomal subunit. Mature ribosomes consist of a small (40S) and a large (60S) subunit. The 40S subunit contains about 33 different proteins and 1 molecule of RNA (18S). The 60S subunit contains about 49 different proteins and 3 molecules of RNA (25S, 5.8S and 5S). Interacts with RPS21.

The protein localises to the cytoplasm. Required for the assembly and/or stability of the 40S ribosomal subunit. Required for the processing of the 20S rRNA-precursor to mature 18S rRNA in a late step of the maturation of 40S ribosomal subunits. This Lachancea thermotolerans (strain ATCC 56472 / CBS 6340 / NRRL Y-8284) (Yeast) protein is Small ribosomal subunit protein uS2.